A 316-amino-acid polypeptide reads, in one-letter code: Ribosomal RNA small subunit methyltransferase H (316 aa).

Residues 35 to 37 (GGH), Asp-55, Phe-79, Asp-101, and Gln-108 each bind S-adenosyl-L-methionine.

Belongs to the methyltransferase superfamily. RsmH family.

The protein localises to the cytoplasm. The enzyme catalyses cytidine(1402) in 16S rRNA + S-adenosyl-L-methionine = N(4)-methylcytidine(1402) in 16S rRNA + S-adenosyl-L-homocysteine + H(+). Functionally, specifically methylates the N4 position of cytidine in position 1402 (C1402) of 16S rRNA. The protein is Ribosomal RNA small subunit methyltransferase H of Aliivibrio salmonicida (strain LFI1238) (Vibrio salmonicida (strain LFI1238)).